The following is a 308-amino-acid chain: GDP-L-colitose synthase (308 aa).

Residues 7–13 (GAGGMVG) and 101–104 (LGSS) each bind NADP(+). Tyr-132 acts as the Proton donor/acceptor in catalysis. NADP(+) is bound by residues Lys-136, 160-163 (PCNL), and His-176. Lys-184, Trp-199, and Arg-206 together coordinate substrate.

Belongs to the NAD(P)-dependent epimerase/dehydratase family. Fucose synthase subfamily. As to quaternary structure, homodimer.

The enzyme catalyses GDP-beta-L-colitose + NAD(+) = GDP-4-dehydro-3,6-dideoxy-alpha-D-mannose + NADH + H(+). The catalysed reaction is GDP-beta-L-colitose + NADP(+) = GDP-4-dehydro-3,6-dideoxy-alpha-D-mannose + NADPH + H(+). It participates in nucleotide-sugar metabolism; GDP-L-colitose biosynthesis. Involved in the biosynthesis of the L-colitose (3,6-dideoxyl-L-xylo-hexose) present in the O-antigen region of lipopolysaccharides (LPS) where it serves as antigenic determinant and are vital for bacterial defense and survival. Catalyzes the two-step NADP-dependent conversion of GDP-4-keto-3,6-dideoxy-D-mannose to GDP-L-colitose. ColC is a bifunctional enzyme catalyzing the C-5 epimerization of GDP-4-keto-3,6-dideoxy-D-mannose and the subsequent C-4 keto reduction of the resulting L-epimer to give GDP-L-colitose. It can use both NADP(+) and NAD(+) as electron acceptor, with a slight preference for NADP(+). The polypeptide is GDP-L-colitose synthase (Yersinia pseudotuberculosis).